The sequence spans 191 residues: Fe/S biogenesis protein NfuA (191 aa).

Cys149 and Cys152 together coordinate [4Fe-4S] cluster.

This sequence belongs to the NfuA family. In terms of assembly, homodimer. Requires [4Fe-4S] cluster as cofactor.

Involved in iron-sulfur cluster biogenesis. Binds a 4Fe-4S cluster, can transfer this cluster to apoproteins, and thereby intervenes in the maturation of Fe/S proteins. Could also act as a scaffold/chaperone for damaged Fe/S proteins. The sequence is that of Fe/S biogenesis protein NfuA from Salmonella choleraesuis (strain SC-B67).